A 194-amino-acid chain; its full sequence is Molybdenum cofactor guanylyltransferase (194 aa).

GTP is bound by residues 12–14 (LAG), K25, N53, D70, and D100. A Mg(2+)-binding site is contributed by D100.

The protein belongs to the MobA family. In terms of assembly, monomer. Mg(2+) serves as cofactor.

The protein resides in the cytoplasm. It catalyses the reaction Mo-molybdopterin + GTP + H(+) = Mo-molybdopterin guanine dinucleotide + diphosphate. Functionally, transfers a GMP moiety from GTP to Mo-molybdopterin (Mo-MPT) cofactor (Moco or molybdenum cofactor) to form Mo-molybdopterin guanine dinucleotide (Mo-MGD) cofactor. The sequence is that of Molybdenum cofactor guanylyltransferase from Vibrio atlanticus (strain LGP32) (Vibrio splendidus (strain Mel32)).